Here is a 102-residue protein sequence, read N- to C-terminus: Large ribosomal subunit protein bL21 (102 aa).

This sequence belongs to the bacterial ribosomal protein bL21 family. In terms of assembly, part of the 50S ribosomal subunit. Contacts protein L20.

This protein binds to 23S rRNA in the presence of protein L20. This Geobacter sp. (strain M21) protein is Large ribosomal subunit protein bL21.